Consider the following 385-residue polypeptide: Meiotic recombination protein SPO11-2 (385 aa).

Positions 24–169 constitute a Topo IIA-type catalytic domain; sequence LPPAEVRARI…LGIMASSRGA (146 aa). The O-(5'-phospho-DNA)-tyrosine intermediate role is filled by Tyr126. Residues Glu219 and Asp272 each contribute to the Mg(2+) site.

The protein belongs to the TOP6A family. Interacts with TOP6B. Mg(2+) serves as cofactor.

The protein resides in the nucleus. It carries out the reaction ATP-dependent breakage, passage and rejoining of double-stranded DNA.. Functionally, required for meiotic recombination. Mediates DNA cleavage that forms the double-strand breaks (DSB) that initiate meiotic recombination. The chain is Meiotic recombination protein SPO11-2 (SPO11-2) from Oryza sativa subsp. japonica (Rice).